We begin with the raw amino-acid sequence, 156 residues long: SsrA-binding protein (156 aa).

This sequence belongs to the SmpB family.

It is found in the cytoplasm. In terms of biological role, required for rescue of stalled ribosomes mediated by trans-translation. Binds to transfer-messenger RNA (tmRNA), required for stable association of tmRNA with ribosomes. tmRNA and SmpB together mimic tRNA shape, replacing the anticodon stem-loop with SmpB. tmRNA is encoded by the ssrA gene; the 2 termini fold to resemble tRNA(Ala) and it encodes a 'tag peptide', a short internal open reading frame. During trans-translation Ala-aminoacylated tmRNA acts like a tRNA, entering the A-site of stalled ribosomes, displacing the stalled mRNA. The ribosome then switches to translate the ORF on the tmRNA; the nascent peptide is terminated with the 'tag peptide' encoded by the tmRNA and targeted for degradation. The ribosome is freed to recommence translation, which seems to be the essential function of trans-translation. This Renibacterium salmoninarum (strain ATCC 33209 / DSM 20767 / JCM 11484 / NBRC 15589 / NCIMB 2235) protein is SsrA-binding protein.